Consider the following 310-residue polypeptide: N-acetyl-gamma-glutamyl-phosphate reductase (310 aa).

The active site involves Cys-117.

Belongs to the NAGSA dehydrogenase family. Type 2 subfamily.

Its subcellular location is the cytoplasm. The catalysed reaction is N-acetyl-L-glutamate 5-semialdehyde + phosphate + NADP(+) = N-acetyl-L-glutamyl 5-phosphate + NADPH + H(+). The protein operates within amino-acid biosynthesis; L-arginine biosynthesis; N(2)-acetyl-L-ornithine from L-glutamate: step 3/4. Functionally, catalyzes the NADPH-dependent reduction of N-acetyl-5-glutamyl phosphate to yield N-acetyl-L-glutamate 5-semialdehyde. The protein is N-acetyl-gamma-glutamyl-phosphate reductase of Brucella abortus (strain S19).